The chain runs to 334 residues: Anthranilate phosphoribosyltransferase (334 aa).

5-phospho-alpha-D-ribose 1-diphosphate contacts are provided by residues G79, 82–83 (GD), S87, 89–92 (NIST), 107–115 (KHGNRSISS), and S119. An anthranilate-binding site is contributed by G79. S91 is a binding site for Mg(2+). N110 is an anthranilate binding site. Position 165 (R165) interacts with anthranilate. Positions 224 and 225 each coordinate Mg(2+).

It belongs to the anthranilate phosphoribosyltransferase family. In terms of assembly, homodimer. Mg(2+) serves as cofactor.

The catalysed reaction is N-(5-phospho-beta-D-ribosyl)anthranilate + diphosphate = 5-phospho-alpha-D-ribose 1-diphosphate + anthranilate. It functions in the pathway amino-acid biosynthesis; L-tryptophan biosynthesis; L-tryptophan from chorismate: step 2/5. Catalyzes the transfer of the phosphoribosyl group of 5-phosphorylribose-1-pyrophosphate (PRPP) to anthranilate to yield N-(5'-phosphoribosyl)-anthranilate (PRA). This chain is Anthranilate phosphoribosyltransferase, found in Streptococcus pneumoniae (strain 70585).